Reading from the N-terminus, the 260-residue chain is Small ribosomal subunit protein eS1 (260 aa).

Positions 1–18 are enriched in basic residues; the sequence is MAVGKNKRISKGKKGGKK. Residues 1 to 22 form a disordered region; that stretch reads MAVGKNKRISKGKKGGKKKAAD.

Belongs to the eukaryotic ribosomal protein eS1 family. Component of the small ribosomal subunit. Mature ribosomes consist of a small (40S) and a large (60S) subunit. The 40S subunit contains about 33 different proteins and 1 molecule of RNA (18S). The 60S subunit contains about 49 different proteins and 3 molecules of RNA (25S, 5.8S and 5S).

It localises to the cytoplasm. The sequence is that of Small ribosomal subunit protein eS1 from Helianthus annuus (Common sunflower).